A 112-amino-acid polypeptide reads, in one-letter code: Tetracenomycin-F1 monooxygenase (112 aa).

The 90-residue stretch at 11–100 (FTLVNVFGVA…SRPKPIFCEV (90 aa)) folds into the ABM domain.

Homotrimer.

The enzyme catalyses tetracenomycin F1 + O2 = tetracenomycin D3 + H2O + H(+). It functions in the pathway antibiotic biosynthesis; tetracenomycin C biosynthesis. Inhibited by p-chloromercuribenzoic acid, N-ethylmaleimide and diethyl pyrocarbonate. In terms of biological role, oxygenase required for conversion of tetracenomycin F1 to tetracenomycin D3. This is Tetracenomycin-F1 monooxygenase (tcmH) from Streptomyces glaucescens.